The primary structure comprises 163 residues: S-fimbrial adhesin protein SfaS (163 aa).

Residues 1–22 form the signal peptide; that stretch reads MKLKAIILATGLINCIAFSAQA. An intrachain disulfide couples C38 to C75. The interval 138–144 is involved in sialic acid binding; that stretch reads KARAVSK.

The protein belongs to the fimbrial protein family.

The protein resides in the fimbrium. Functionally, fimbriae (also called pili), polar filaments radiating from the surface of the bacterium to a length of 0.5-1.5 micrometers and numbering 100-300 per cell, enable bacteria to colonize the epithelium of specific host organs. Its function is as follows. A minor fimbrial subunit, this protein is necessary for full expression of S-specific binding. S-fimbrial adhesins enable pathogenic E.coli causing urinary-tract infections or newborn meningitis to attach to glycoproteins terminating with alpha-sialic acid-(2-3)-beta-Gal. This protein binds to the alpha-sialic acid-(2-3)-beta-Gal and is thus responsible for erythrocyte recognition and hemagglutination. The sequence is that of S-fimbrial adhesin protein SfaS (sfaS) from Escherichia coli O6:K15:H31 (strain 536 / UPEC).